A 684-amino-acid polypeptide reads, in one-letter code: Macrolide export ATP-binding/permease protein MacB (684 aa).

An ABC transporter domain is found at 2–243; that stretch reads IQLYGLRKDY…RSRLANSRAE (242 aa). ATP is bound at residue 38–45; that stretch reads GSSGSGKT. 5 helical membrane passes run 248–268, 275–295, 563–583, 615–635, and 644–664; these read PASA…VLAL, TVLT…TMEL, LVIA…IMLV, VLCV…SVLV, and AMSI…GIVF.

This sequence belongs to the ABC transporter superfamily. Macrolide exporter (TC 3.A.1.122) family. In terms of assembly, homodimer.

The protein localises to the cell inner membrane. In terms of biological role, non-canonical ABC transporter that contains transmembrane domains (TMD), which form a pore in the inner membrane, and an ATP-binding domain (NBD), which is responsible for energy generation. Confers resistance against macrolides. The polypeptide is Macrolide export ATP-binding/permease protein MacB (Rhodopirellula baltica (strain DSM 10527 / NCIMB 13988 / SH1)).